A 366-amino-acid chain; its full sequence is Fe-S cluster assembly protein DRE2 (366 aa).

The segment at 8–167 is N-terminal SAM-like domain; the sequence is AQGSGRFLLL…KPDFGAQQAV (160 aa). The segment at 100–136 is disordered; it reads RNRDNQIWGSGSDSAAGLGSSDGGGGGGGGEKKSSSE. Positions 108–118 are enriched in low complexity; it reads GSGSDSAAGLG. Over residues 119–128 the composition is skewed to gly residues; sequence SSDGGGGGGG. Residues 168-258 are linker; the sequence is PLKLGRKKNL…EEELLGEFDM (91 aa). C268, C279, C282, and C284 together coordinate [2Fe-2S] cluster. The segment at 268 to 284 is fe-S binding site A; the sequence is CRPKAGKRRRACKDCTC. 4 residues coordinate [4Fe-4S] cluster: C329, C332, C340, and C343. 2 short sequence motifs (cx2C motif) span residues 329–332 and 340–343; these read CGNC and CDGC. The tract at residues 329–343 is fe-S binding site B; that stretch reads CGNCALGDAFRCDGC.

This sequence belongs to the anamorsin family. Monomer. Interacts with TAH18. Interacts with MIA40. It depends on [2Fe-2S] cluster as a cofactor. [4Fe-4S] cluster serves as cofactor.

It is found in the cytoplasm. Its subcellular location is the mitochondrion intermembrane space. In terms of biological role, component of the cytosolic iron-sulfur (Fe-S) protein assembly (CIA) machinery required for the maturation of extramitochondrial Fe-S proteins. Part of an electron transfer chain functioning in an early step of cytosolic Fe-S biogenesis, facilitating the de novo assembly of a [4Fe-4S] cluster on the scaffold complex CFD1-NBP35. Electrons are transferred to DRE2 from NADPH via the FAD- and FMN-containing protein TAH18. TAH18-DRE2 are also required for the assembly of the diferric tyrosyl radical cofactor of ribonucleotide reductase (RNR), probably by providing electrons for reduction during radical cofactor maturation in the catalytic small subunit RNR2. This chain is Fe-S cluster assembly protein DRE2, found in Paracoccidioides lutzii (strain ATCC MYA-826 / Pb01) (Paracoccidioides brasiliensis).